A 336-amino-acid polypeptide reads, in one-letter code: Galectin-12 (336 aa).

Galectin domains are found at residues 49–183 and 212–336; these read YVTT…VGFL and CSHA…CVHS.

In terms of tissue distribution, not widely expressed. Predominantly expressed in adipose tissue.

It is found in the nucleus. Binds lactose. May participate in the apoptosis of adipocytes. The polypeptide is Galectin-12 (LGALS12) (Homo sapiens (Human)).